A 277-amino-acid polypeptide reads, in one-letter code: 4-deoxy-L-threo-5-hexosulose-uronate ketol-isomerase (277 aa).

Residues His-195, His-197, Glu-202, and His-244 each coordinate Zn(2+).

This sequence belongs to the KduI family. Requires Zn(2+) as cofactor.

The catalysed reaction is 5-dehydro-4-deoxy-D-glucuronate = 3-deoxy-D-glycero-2,5-hexodiulosonate. It participates in glycan metabolism; pectin degradation; 2-dehydro-3-deoxy-D-gluconate from pectin: step 4/5. Functionally, catalyzes the isomerization of 5-dehydro-4-deoxy-D-glucuronate to 3-deoxy-D-glycero-2,5-hexodiulosonate. The polypeptide is 4-deoxy-L-threo-5-hexosulose-uronate ketol-isomerase (Oceanobacillus iheyensis (strain DSM 14371 / CIP 107618 / JCM 11309 / KCTC 3954 / HTE831)).